The sequence spans 291 residues: NAD kinase (291 aa).

The active-site Proton acceptor is the Asp73. Residues 73–74 (DG), 147–148 (ND), Arg175, Asp177, and Gln246 contribute to the NAD(+) site.

It belongs to the NAD kinase family. The cofactor is a divalent metal cation.

The protein localises to the cytoplasm. The enzyme catalyses NAD(+) + ATP = ADP + NADP(+) + H(+). In terms of biological role, involved in the regulation of the intracellular balance of NAD and NADP, and is a key enzyme in the biosynthesis of NADP. Catalyzes specifically the phosphorylation on 2'-hydroxyl of the adenosine moiety of NAD to yield NADP. This chain is NAD kinase, found in Laribacter hongkongensis (strain HLHK9).